Here is a 232-residue protein sequence, read N- to C-terminus: Phosphatidylserine decarboxylase proenzyme (232 aa).

S190 functions as the Schiff-base intermediate with substrate; via pyruvic acid in the catalytic mechanism. Residue S190 is modified to Pyruvic acid (Ser); by autocatalysis.

The protein belongs to the phosphatidylserine decarboxylase family. PSD-A subfamily. In terms of assembly, heterodimer of a large membrane-associated beta subunit and a small pyruvoyl-containing alpha subunit. Pyruvate is required as a cofactor. In terms of processing, is synthesized initially as an inactive proenzyme. Formation of the active enzyme involves a self-maturation process in which the active site pyruvoyl group is generated from an internal serine residue via an autocatalytic post-translational modification. Two non-identical subunits are generated from the proenzyme in this reaction, and the pyruvate is formed at the N-terminus of the alpha chain, which is derived from the carboxyl end of the proenzyme. The post-translation cleavage follows an unusual pathway, termed non-hydrolytic serinolysis, in which the side chain hydroxyl group of the serine supplies its oxygen atom to form the C-terminus of the beta chain, while the remainder of the serine residue undergoes an oxidative deamination to produce ammonia and the pyruvoyl prosthetic group on the alpha chain.

It is found in the cell membrane. It carries out the reaction a 1,2-diacyl-sn-glycero-3-phospho-L-serine + H(+) = a 1,2-diacyl-sn-glycero-3-phosphoethanolamine + CO2. It participates in phospholipid metabolism; phosphatidylethanolamine biosynthesis; phosphatidylethanolamine from CDP-diacylglycerol: step 2/2. Functionally, catalyzes the formation of phosphatidylethanolamine (PtdEtn) from phosphatidylserine (PtdSer). The chain is Phosphatidylserine decarboxylase proenzyme from Allorhizobium ampelinum (strain ATCC BAA-846 / DSM 112012 / S4) (Agrobacterium vitis (strain S4)).